We begin with the raw amino-acid sequence, 305 residues long: Ribonuclease BN (305 aa).

Zn(2+)-binding residues include H64, H66, D68, H69, H141, D212, and H270. Residue D68 is the Proton acceptor of the active site.

It belongs to the RNase Z family. RNase BN subfamily. In terms of assembly, homodimer. It depends on Zn(2+) as a cofactor.

In terms of biological role, zinc phosphodiesterase, which has both exoribonuclease and endoribonuclease activities. The sequence is that of Ribonuclease BN from Shigella boydii serotype 18 (strain CDC 3083-94 / BS512).